The primary structure comprises 223 residues: Deoxyribose-phosphate aldolase (223 aa).

The active-site Proton donor/acceptor is the Asp91. Catalysis depends on Lys153, which acts as the Schiff-base intermediate with acetaldehyde. Lys182 serves as the catalytic Proton donor/acceptor.

This sequence belongs to the DeoC/FbaB aldolase family. DeoC type 1 subfamily.

Its subcellular location is the cytoplasm. The enzyme catalyses 2-deoxy-D-ribose 5-phosphate = D-glyceraldehyde 3-phosphate + acetaldehyde. Its pathway is carbohydrate degradation; 2-deoxy-D-ribose 1-phosphate degradation; D-glyceraldehyde 3-phosphate and acetaldehyde from 2-deoxy-alpha-D-ribose 1-phosphate: step 2/2. In terms of biological role, catalyzes a reversible aldol reaction between acetaldehyde and D-glyceraldehyde 3-phosphate to generate 2-deoxy-D-ribose 5-phosphate. This Streptococcus pyogenes serotype M1 protein is Deoxyribose-phosphate aldolase.